The chain runs to 298 residues: Protein ILRUN (298 aa).

The tract at residues 199 to 277 (NTQPHRKVEG…SVNLSPSSHA (79 aa)) is disordered. Ser-215 and Ser-222 each carry phosphoserine. Low complexity predominate over residues 242–255 (TWAPAPDTWAPAPD). Polar residues predominate over residues 262–277 (NRLSQNSVNLSPSSHA). Ser-272 carries the phosphoserine modification.

As to quaternary structure, interacts with IRF3; the interaction inhibits IRF3 binding to its DNA consensus sequence. In terms of tissue distribution, expressed in lung (at protein level).

Its subcellular location is the cytoplasm. It localises to the nucleus. Negative regulator of innate antiviral response. Blocks IRF3-dependent cytokine production such as IFNA, IFNB and TNF. Interacts with IRF3 and inhibits IRF3 recruitment to type I IFN promoter sequences while also reducing nuclear levels of the coactivators EP300 and CREBBP. This chain is Protein ILRUN, found in Homo sapiens (Human).